We begin with the raw amino-acid sequence, 275 residues long: NH(3)-dependent NAD(+) synthetase (275 aa).

50 to 57 (GISGGVDS) is an ATP binding site. Aspartate 56 is a binding site for Mg(2+). Arginine 147 serves as a coordination point for deamido-NAD(+). Threonine 167 serves as a coordination point for ATP. Glutamate 172 contributes to the Mg(2+) binding site. Deamido-NAD(+) contacts are provided by lysine 180 and aspartate 187. Residues lysine 196 and threonine 218 each coordinate ATP. 267–268 (HK) is a binding site for deamido-NAD(+).

The protein belongs to the NAD synthetase family. Homodimer.

It catalyses the reaction deamido-NAD(+) + NH4(+) + ATP = AMP + diphosphate + NAD(+) + H(+). Its pathway is cofactor biosynthesis; NAD(+) biosynthesis; NAD(+) from deamido-NAD(+) (ammonia route): step 1/1. Catalyzes the ATP-dependent amidation of deamido-NAD to form NAD. Uses ammonia as a nitrogen source. The sequence is that of NH(3)-dependent NAD(+) synthetase from Pseudomonas putida (strain ATCC 700007 / DSM 6899 / JCM 31910 / BCRC 17059 / LMG 24140 / F1).